We begin with the raw amino-acid sequence, 544 residues long: Methionine--tRNA ligase 2 (544 aa).

The 'HIGH' region signature appears at 10–20; the sequence is PYANGSLHLGH. Residues C141, C144, C153, and C156 each coordinate Zn(2+). Residues 329–333 carry the 'KMSKS' region motif; it reads KLSTS. T332 is a binding site for ATP.

This sequence belongs to the class-I aminoacyl-tRNA synthetase family. MetG type 1 subfamily. As to quaternary structure, monomer. The cofactor is Zn(2+).

Its subcellular location is the cytoplasm. It catalyses the reaction tRNA(Met) + L-methionine + ATP = L-methionyl-tRNA(Met) + AMP + diphosphate. In terms of biological role, is required not only for elongation of protein synthesis but also for the initiation of all mRNA translation through initiator tRNA(fMet) aminoacylation. This chain is Methionine--tRNA ligase 2, found in Bacillus anthracis.